Reading from the N-terminus, the 457-residue chain is uncharacterized protein (457 aa).

Position 75 is an N6-(pyridoxal phosphate)lysine (Lys75).

Pyridoxal 5'-phosphate serves as cofactor.

This is an uncharacterized protein from Sinorhizobium fredii (strain NBRC 101917 / NGR234).